The following is a 523-amino-acid chain: La-related protein 1C (523 aa).

A compositionally biased stretch (low complexity) spans methionine 1–proline 16. 2 disordered regions span residues methionine 1–glutamate 52 and alanine 95–proline 313. Alanine 2 bears the N-acetylalanine mark. A compositionally biased stretch (polar residues) spans asparagine 22–alanine 31. Composition is skewed to low complexity over residues glutamine 32–proline 44 and serine 146–serine 169. Serine 33 is modified (phosphoserine). Composition is skewed to polar residues over residues glutamine 206 to histidine 270 and histidine 282 to glycine 305. The 90-residue stretch at histidine 363–arginine 452 folds into the HTH La-type RNA-binding domain. The interval glycine 474–arginine 523 is disordered. Over residues serine 477–asparagine 516 the composition is skewed to polar residues.

Belongs to the LARP family. As to expression, age-dependent accumulation in rosette leaves.

It is found in the cytoplasm. Promotes leaf senescence mediated by abscisic acid (ABA), salicylic acid (SA) and jasmonic acid (MeJA), probably though the induction of expression of senescence-associated genes (SAGs) and defense-related genes. The polypeptide is La-related protein 1C (LARP1C) (Arabidopsis thaliana (Mouse-ear cress)).